Reading from the N-terminus, the 243-residue chain is ADP-ribosylation factor-like protein 10 (243 aa).

Residues 83 to 90, 127 to 131, and 184 to 187 each bind GTP; these read GLDGSGKS, EIGGS, and NKQD.

Belongs to the small GTPase superfamily. Arf family.

This Mus musculus (Mouse) protein is ADP-ribosylation factor-like protein 10 (Arl10).